The following is a 2809-amino-acid chain: Fibrillin-3 (2809 aa).

Residues 1–31 form the signal peptide; it reads MTLEGLYLARGPLARLLLAWSALLCMAGGQG. A propeptide spanning residues 32 to 48 is cleaved from the precursor; sequence RWDGALEAAGPGRVRRR. The EGF-like 1 domain occupies 147-179; that stretch reads GQPICDRGCHNGGRCIGPNRCACVYGFMGPQCE. Disulfide bonds link Cys-151-Cys-161, Cys-155-Cys-167, and Cys-169-Cys-178. The 53-residue stretch at 185 to 237 folds into the TB 1 domain; the sequence is GPCFGQVGPEGCQHQLTGLVCTKALCCATVGRAWGLPCELCPAQPHPCRRGFI. The 42-residue stretch at 247–288 folds into the EGF-like 2; calcium-binding domain; it reads DVDECQAVPGLCQGGSCVNMVGSFHCRCPVGHRLSDSSAACE. 3 disulfides stabilise this stretch: Cys-251-Cys-263, Cys-258-Cys-272, and Cys-274-Cys-287. Positions 293 to 346 constitute a TB 2 domain; the sequence is GACFSVLFGGRCAGDLAGHYTRRQCCCDRGRCWAAGPVPELCPPRGSNEFQQLC. Asn-406 carries an N-linked (GlcNAc...) asparagine glycan. Residues 408-448 form the EGF-like 3 domain; it reads TIDICRHFTNLCLNGRCLPTPSSYRCECNVGYTQDVRGECI. 15 cysteine pairs are disulfide-bonded: Cys-412–Cys-424, Cys-419–Cys-433, Cys-435–Cys-447, Cys-453–Cys-463, Cys-458–Cys-472, Cys-474–Cys-487, Cys-493–Cys-505, Cys-500–Cys-514, Cys-516–Cys-529, Cys-535–Cys-546, Cys-541–Cys-555, Cys-557–Cys-570, Cys-576–Cys-587, Cys-582–Cys-596, and Cys-598–Cys-611. Positions 449 to 488 constitute an EGF-like 4; calcium-binding domain; sequence DVDECTSSPCHHGDCVNIPGTYHCRCYPGFQATPTRQACV. One can recognise an EGF-like 5; calcium-binding domain in the interval 489 to 530; sequence DVDECIVSGGLCHLGRCVNTEGSFQCVCNAGFELSPDGKNCV. The region spanning 531 to 571 is the EGF-like 6; calcium-binding domain; that stretch reads DHNECATSTMCVNGVCLNEDGSFSCLCKPGFLLAPGGHYCM. In terms of domain architecture, EGF-like 7; calcium-binding spans 572 to 612; sequence DIDECQTPGICVNGHCTNTEGSFRCQCLGGLAVGTDGRVCV. Positions 618 to 670 constitute a TB 3 domain; sequence STCYGAIEKGSCARPFPGTVTKSECCCANPDHGFGEPCQLCPAKDSAEFQALC. The EGF-like 8; calcium-binding domain occupies 682-723; it reads DINECALDPEVCANGVCENLRGSYRCVCNLGYEAGASGKDCT. Intrachain disulfides connect Cys-686–Cys-698, Cys-693–Cys-707, Cys-709–Cys-722, Cys-728–Cys-740, Cys-735–Cys-749, Cys-751–Cys-764, Cys-770–Cys-780, Cys-775–Cys-789, and Cys-791–Cys-804. The region spanning 724 to 765 is the EGF-like 9; calcium-binding domain; sequence DVDECALNSLLCDNGWCQNSPGSYSCSCPPGFHFWQDTEICK. The region spanning 766–805 is the EGF-like 10; calcium-binding domain; the sequence is DVDECLSSPCVSGVCRNLAGSYTCKCGPGSRLDPSGTFCL. Residues 810–861 enclose the TB 4 domain; it reads GTCWLKIQESRCEVNLQGASLRSECCATLGAAWGSPCERCEIDPACARGFAR. The EGF-like 11; calcium-binding domain occupies 869–910; sequence DVNECESFPGVCPNGRCVNTAGSFRCECPEGLMLDASGRLCV. 3 cysteine pairs are disulfide-bonded: Cys-873–Cys-885, Cys-880–Cys-894, and Cys-896–Cys-909. Residues 915–966 enclose the TB 5 domain; sequence EPCFLRWDEDECGVTLPGKYRMDVCCCSIGAVWGVECEACPDPESLEFASLC. The 42-residue stretch at 986 to 1027 folds into the EGF-like 12; calcium-binding domain; it reads DVNECKVFPGLCTHGTCRNTVGSFHCACAGGFALDAQERNCT. 36 disulfides stabilise this stretch: Cys-990–Cys-1002, Cys-997–Cys-1011, Cys-1013–Cys-1026, Cys-1032–Cys-1044, Cys-1039–Cys-1053, Cys-1055–Cys-1069, Cys-1075–Cys-1087, Cys-1082–Cys-1096, Cys-1098–Cys-1111, Cys-1117–Cys-1129, Cys-1124–Cys-1138, Cys-1140–Cys-1153, Cys-1159–Cys-1170, Cys-1166–Cys-1179, Cys-1181–Cys-1194, Cys-1200–Cys-1212, Cys-1207–Cys-1221, Cys-1223–Cys-1236, Cys-1242–Cys-1254, Cys-1249–Cys-1263, Cys-1265–Cys-1278, Cys-1284–Cys-1297, Cys-1291–Cys-1306, Cys-1308–Cys-1319, Cys-1325–Cys-1338, Cys-1332–Cys-1347, Cys-1349–Cys-1360, Cys-1366–Cys-1378, Cys-1373–Cys-1387, Cys-1389–Cys-1402, Cys-1408–Cys-1419, Cys-1414–Cys-1428, Cys-1430–Cys-1443, Cys-1449–Cys-1460, Cys-1455–Cys-1469, and Cys-1471–Cys-1484. A glycan (N-linked (GlcNAc...) asparagine) is linked at Asn-1025. The region spanning 1028–1070 is the EGF-like 13; calcium-binding domain; that stretch reads DIDECRISPDLCGQGTCVNTPGSFECECFPGYESGFMLMKNCM. The region spanning 1071-1112 is the EGF-like 14; calcium-binding domain; it reads DVDECARDPLLCRGGTCTNTDGSYKCQCPPGHELTAKGTACE. In terms of domain architecture, EGF-like 15; calcium-binding spans 1113 to 1154; that stretch reads DIDECSLSDGLCPHGQCVNVIGAFQCSCHAGFQSTPDRQGCV. The region spanning 1155-1195 is the EGF-like 16; calcium-binding domain; that stretch reads DINECRVQNGGCDVHCINTEGSYRCSCGQGYSLMPDGRACA. In terms of domain architecture, EGF-like 17 spans 1196 to 1237; the sequence is DVDECEENPRVCDQGHCTNMPGGHRCLCYDGFMATPDMRTCV. One can recognise an EGF-like 18; calcium-binding domain in the interval 1238–1279; it reads DVDECDLNPHICLHGDCENTKGSFVCHCQLGYMVRKGATGCS. In terms of domain architecture, EGF-like 19; calcium-binding spans 1280-1320; it reads DVDECEVGGHNCDSHASCLNIPGSFSCRCLPGWVGDGFECH. The EGF-like 20; calcium-binding domain maps to 1321-1361; that stretch reads DLDECVSQEHRCSPRGDCLNVPGSYRCTCRQGFAGDGFFCE. Positions 1362–1403 constitute an EGF-like 21; calcium-binding domain; the sequence is DRDECAENVDLCDNGQCLNAPGGYRCECEMGFDPTEDHRACQ. The 41-residue stretch at 1404–1444 folds into the EGF-like 22; calcium-binding domain; that stretch reads DVDECAQGNLCAFGSCENLPGMFRCICNGGYELDRGGGNCT. The N-linked (GlcNAc...) asparagine glycan is linked to Asn-1442. Residues 1445–1485 form the EGF-like 23; calcium-binding domain; that stretch reads DINECADPVNCINGVCINTPGSYLCSCPQDFELNPSGVGCV. The TB 6 domain occupies 1490–1546; the sequence is GNCFLETHDRGDSGISCSAEIGVGVTRASCCCSLGRAWGNPCELCPMANTTEYRTLC. N-linked (GlcNAc...) asparagine glycosylation is present at Asn-1538. Positions 1563–1604 constitute an EGF-like 24; calcium-binding domain; that stretch reads DIDECQELPGLCQGGDCVNTFGSFQCECPPGYHLSEHTRICE. Cystine bridges form between Cys-1567–Cys-1579, Cys-1574–Cys-1588, Cys-1590–Cys-1603, Cys-1609–Cys-1621, Cys-1616–Cys-1630, and Cys-1632–Cys-1645. In terms of domain architecture, EGF-like 25; calcium-binding spans 1605 to 1646; it reads DIDECSTHSGICGPGTCYNTLGNYTCVCPAEYLQVNGGNNCM. The N-linked (GlcNAc...) asparagine glycan is linked to Asn-1627. Positions 1651–1703 constitute a TB 7 domain; that stretch reads SVCFRHYNGTCQNELAFNVTRKMCCCSYNIGQAWNRPCEACPTPISPDYQILC. Residues Asn-1658 and Asn-1668 are each glycosylated (N-linked (GlcNAc...) asparagine). In terms of domain architecture, EGF-like 26; calcium-binding spans 1721–1762; the sequence is DIDECGEIPAICANGICINQIGSFRCECPAGFNYNSILLACE. 21 cysteine pairs are disulfide-bonded: Cys-1725–Cys-1737, Cys-1732–Cys-1746, Cys-1748–Cys-1761, Cys-1767–Cys-1780, Cys-1774–Cys-1789, Cys-1791–Cys-1803, Cys-1809–Cys-1821, Cys-1816–Cys-1830, Cys-1832–Cys-1845, Cys-1851–Cys-1861, Cys-1856–Cys-1870, Cys-1872–Cys-1884, Cys-1890–Cys-1903, Cys-1898–Cys-1912, Cys-1914–Cys-1927, Cys-1933–Cys-1945, Cys-1940–Cys-1954, Cys-1956–Cys-1967, Cys-1973–Cys-1985, Cys-1980–Cys-1994, and Cys-1996–Cys-2009. The EGF-like 27; calcium-binding domain maps to 1763–1804; that stretch reads DVDECGSRESPCQQNADCINIPGSYRCKCTRGYKLSPGGACV. Residues 1805–1846 enclose the EGF-like 28 domain; sequence GRNECREIPNVCSHGDCMDTEGSYMCLCHRGFQASADQTLCM. The region spanning 1847–1885 is the EGF-like 29; calcium-binding domain; that stretch reads DIDECDRQPCGNGTCKNIIGSYNCLCFPGFVVTHNGDCV. N-linked (GlcNAc...) asparagine glycosylation occurs at Asn-1858. The EGF-like 30; calcium-binding domain occupies 1886 to 1928; sequence DFDECTTLVGQVCRFGHCLNTAGSFHCLCQDGFELTADGKNCV. The EGF-like 31; calcium-binding domain maps to 1929–1968; that stretch reads DTNECLSLAGTCLPGTCQNLEGSFRCICPPGFQVQSDHCI. Residues 1969-2010 enclose the EGF-like 32; calcium-binding domain; sequence DIDECSEEPNLCLFGTCTNSPGSFQCLCPPGFVLSDNGHRCF. Residues 2015 to 2068 form the TB 8 domain; that stretch reads SFCFTRFEAGKCSVPKAFNTTKTRCCCSKRPGEGWGDPCELCPQEGSAAFQELC. N-linked (GlcNAc...) asparagine glycosylation is present at Asn-2033. The EGF-like 33; calcium-binding domain occupies 2084 to 2125; it reads DVNECAENPGVCTNGVCVNTDGSFRCECPFGYSLDFTGINCV. Disulfide bonds link Cys-2088-Cys-2100, Cys-2095-Cys-2109, Cys-2111-Cys-2124, Cys-2130-Cys-2141, Cys-2136-Cys-2150, Cys-2152-Cys-2164, Cys-2170-Cys-2181, Cys-2177-Cys-2190, Cys-2192-Cys-2205, Cys-2211-Cys-2225, Cys-2218-Cys-2234, Cys-2236-Cys-2250, Cys-2256-Cys-2268, Cys-2263-Cys-2277, and Cys-2279-Cys-2292. The region spanning 2126 to 2165 is the EGF-like 34; calcium-binding domain; sequence DTDECSVGHPCGQGTCTNVIGGFECACADGFEPGLMMTCE. Positions 2166 to 2206 constitute an EGF-like 35; calcium-binding domain; sequence DIDECSLNPLLCAFRCHNTEGSYLCTCPAGYTLREDGAMCR. The EGF-like 36; calcium-binding domain maps to 2207–2251; sequence DVDECADGQQDCHARGMECKNLIGTFACVCPPGMRPLPGSGEGCT. In terms of domain architecture, EGF-like 37; calcium-binding spans 2252 to 2293; the sequence is DDNECHAQPDLCVNGRCVNTAGSFRCDCDEGFQPSPTLTECH. In terms of domain architecture, TB 9 spans 2298–2351; sequence GPCFAEVLQTMCRSLSSSSEAVTRAECCCGGGRGWGPRCELCPLPGTSAYRKLC. In terms of domain architecture, EGF-like 38; calcium-binding spans 2363-2404; sequence DVDECRMLAHLCAHGECINSLGSFRCHCQAGYTPDATATTCL. 21 disulfide bridges follow: Cys-2367–Cys-2379, Cys-2374–Cys-2388, Cys-2390–Cys-2403, Cys-2409–Cys-2420, Cys-2416–Cys-2429, Cys-2431–Cys-2444, Cys-2450–Cys-2461, Cys-2457–Cys-2470, Cys-2472–Cys-2483, Cys-2489–Cys-2502, Cys-2496–Cys-2511, Cys-2513–Cys-2526, Cys-2532–Cys-2542, Cys-2538–Cys-2551, Cys-2553–Cys-2566, Cys-2572–Cys-2584, Cys-2579–Cys-2593, Cys-2595–Cys-2608, Cys-2614–Cys-2625, Cys-2621–Cys-2634, and Cys-2636–Cys-2648. Positions 2405-2445 constitute an EGF-like 39; calcium-binding domain; the sequence is DMDECSQVPKPCTFLCKNTKGSFLCSCPRGYLLEEDGRTCK. The EGF-like 40; calcium-binding domain maps to 2446–2484; the sequence is DLDECTSRQHNCQFLCVNTVGAFTCRCPPGFTQHHQACF. One can recognise an EGF-like 41; calcium-binding domain in the interval 2485–2527; it reads DNDECSAQPGPCGAHGHCHNTPGSFRCECHQGFTLVSSGHGCE. The EGF-like 42; calcium-binding domain maps to 2528-2567; the sequence is DVNECDGPHRCQHGCQNQLGGYRCSCPQGFTQHSQWAQCV. The EGF-like 43; calcium-binding domain maps to 2568–2609; sequence DENECALSPPTCGSASCRNTLGGFRCVCPSGFDFDQALGGCQ. The EGF-like 44; calcium-binding domain occupies 2610-2649; that stretch reads EVDECAGRRGPCSYSCANTPGGFLCGCPQGYFRAGQGHCV. N-linked (GlcNAc...) asparagine glycosylation is present at Asn-2713.

Belongs to the fibrillin family. In terms of processing, probably forms intermolecular disulfide bonds either with other FBN3 molecules or with other components of the microfibrils. Predominantly expressed in connective tissues such as skeletal muscle, tendon, skin, perichondrium and periosteum. Highly expressed in fetal lung, brain, kidney. Expressed at low level in prostate, testis, mammary gland, uterus, ovary, placenta, bladder, adrenal gland, thyroid, fetal thymus, fetal liver, liver, fetal heart and heart.

The protein localises to the secreted. It localises to the extracellular space. The protein resides in the extracellular matrix. In terms of biological role, fibrillins are structural components of 10-12 nm extracellular calcium-binding microfibrils, which occur either in association with elastin or in elastin-free bundles. Fibrillin-containing microfibrils provide long-term force bearing structural support. The chain is Fibrillin-3 (FBN3) from Homo sapiens (Human).